Here is a 284-residue protein sequence, read N- to C-terminus: Ubiquinone biosynthesis protein COQ4, mitochondrial (284 aa).

Histidine 165, aspartate 166, histidine 169, and glutamate 181 together coordinate Zn(2+).

It belongs to the COQ4 family. In terms of assembly, component of a multi-subunit COQ enzyme complex, composed of at least COQ3, COQ4, COQ5, COQ6, COQ7 and COQ9. Zn(2+) is required as a cofactor.

Its subcellular location is the mitochondrion inner membrane. It catalyses the reaction a 4-hydroxy-3-methoxy-5-(all-trans-polyprenyl)benzoate + H(+) = a 2-methoxy-6-(all-trans-polyprenyl)phenol + CO2. It functions in the pathway cofactor biosynthesis; ubiquinone biosynthesis. Functionally, lyase that catalyzes the C1-decarboxylation of 4-hydroxy-3-methoxy-5-(all-trans-polyprenyl)benzoic acid into 2-methoxy-6-(all-trans-polyprenyl)phenol during ubiquinone biosynthesis. The sequence is that of Ubiquinone biosynthesis protein COQ4, mitochondrial from Blastomyces gilchristii (strain SLH14081) (Blastomyces dermatitidis).